A 420-amino-acid chain; its full sequence is Vasopressin V1a receptor (420 aa).

The segment at 1–20 (MSFPRGSYDPAASNSSPWWP) is disordered. The Extracellular segment spans residues 1 to 54 (MSFPRGSYDPAASNSSPWWPLSAEDANSSWEAAGHQKGSDPSGDVRNEELAKLE). The N-linked (GlcNAc...) asparagine glycan is linked to N27. A helical membrane pass occupies residues 55–75 (IAVLAVIFVVAVLGNSSVLLA). The Cytoplasmic segment spans residues 76 to 92 (LHRTPRKTSRMHLFIRH). A helical membrane pass occupies residues 93–113 (LSLADLAVAFFQVLPQLCWDI). Topologically, residues 114–125 (TYRFRGPDWLCR) are extracellular. A disulfide bridge links C124 with C205. A helical membrane pass occupies residues 126–146 (VVKHLQVFAMFASAYMLVVMT). Over 147-168 (ADRYIAVCHPLKTLQQPTRRSR) the chain is Cytoplasmic. Residues 169–189 (LMIAASWVLSFLLSTPQYFIF) traverse the membrane as a helical segment. Residues 190 to 225 (SMIEIEVNNGTKTQDCWATFIQPWGTRAYVTWMTSG) lie on the Extracellular side of the membrane. Residue N198 is glycosylated (N-linked (GlcNAc...) asparagine). The helical transmembrane segment at 226–246 (VFVVPVVILGTCYGFICYHIW) threads the bilayer. Residues 247–294 (RNVRGKTASRQSKGSGEDVAPFHKGLLVTPCVSSVKTISRAKIRTVKM) are Cytoplasmic-facing. The chain crosses the membrane as a helical span at residues 295–315 (TFVIVTAYILCWAPFFIVQMW). The Extracellular portion of the chain corresponds to 316–331 (SVWDDNFIWTDSENPS). The chain crosses the membrane as a helical span at residues 332–352 (ITITALLASLNSCCNPWIYMF). The Cytoplasmic portion of the chain corresponds to 353-420 (FSGHLLQDCV…RSIRFIPVST (68 aa)). Residues C367 and C368 are each lipidated (S-palmitoyl cysteine). The tract at residues 379–411 (DSDNMSRRHTSYSNNRSPTNSTGTWKDSPKSSR) is disordered. Over residues 389–403 (SYSNNRSPTNSTGTW) the composition is skewed to polar residues. S406 carries the phosphoserine modification.

This sequence belongs to the G-protein coupled receptor 1 family. Vasopressin/oxytocin receptor subfamily.

The protein localises to the cell membrane. Its function is as follows. Receptor for arginine vasopressin. The activity of this receptor is mediated by G proteins which activate a phosphatidyl-inositol-calcium second messenger system. Involved in social memory formation. This Microtus ochrogaster (Prairie vole) protein is Vasopressin V1a receptor (Avpr1a).